A 101-amino-acid polypeptide reads, in one-letter code: Small ribosomal subunit protein uS14 (101 aa).

The protein belongs to the universal ribosomal protein uS14 family. In terms of assembly, part of the 30S ribosomal subunit. Contacts proteins S3 and S10.

In terms of biological role, binds 16S rRNA, required for the assembly of 30S particles and may also be responsible for determining the conformation of the 16S rRNA at the A site. This is Small ribosomal subunit protein uS14 from Pseudomonas syringae pv. tomato (strain ATCC BAA-871 / DC3000).